The primary structure comprises 700 residues: Phenylalanine ammonia-lyase hkm12 (700 aa).

Catalysis depends on Tyr-82, which acts as the Proton donor/acceptor. Positions 183–185 form a cross-link, 5-imidazolinone (Ala-Gly); sequence ASG. A 2,3-didehydroalanine (Ser) modification is found at Ser-184. The (E)-cinnamate site is built by Asn-242, Gln-325, Arg-331, Asn-361, Lys-432, Glu-460, and Asn-463.

It belongs to the PAL/histidase family. Post-translationally, contains an active site 4-methylidene-imidazol-5-one (MIO), which is formed autocatalytically by cyclization and dehydration of residues Ala-Ser-Gly.

The enzyme catalyses L-phenylalanine = (E)-cinnamate + NH4(+). It functions in the pathway secondary metabolite biosynthesis. Its function is as follows. Phenylalanine ammonia-lyase; part of the gene cluster that mediates the biosynthesis of hancockiamides, an unusual new family of N-cinnamoylated piperazines. The NRPS hkm10 and the NmrA-like reductase hkm9 are proposed to convert two molecules of L-Phe to the intermediary piperazine called xenocockiamide A. Xenocockiamide A is then converted to hancockiamide D via a series of hydroxylations and O-methylations. The tyrosinase hkm6 may catalyze an aromatic hydroxylation, then the 2-oxoglutarate-dependent Fe(II) dioxygenase hkm4 and the FAD-dependent phenol hydroxylase hkm7 may catalyze consecutive hydroxylations to install 2 more hydroxy groups, and the methyltransferase hkm8 probably catalyzes two methylations using 2 molecules of S-adenosyl-L-methionine (SAM). The NRPS hkm11 activates and transfers trans-cinnamate supplied by the PAL hkm12 to hancockiamide D and produces hancockiamide A. NRPS Hkm11 has the flexibility to tolerate the bulky hancockiamide G as a substrate and the absence of the acetyl-transferase hkm3 opens up the opportunity for hkm11 to introduce a second N-cinnamoyl moiety. The cytochrome P450 monooxygenase hkm5 catalyzes the methylenedioxy bridge formation, converting hancockiamide A into hancockiamide G. Hkm5 can also convert hancockiamide B into hancockiamide C, and hancockiamide D into hancockiamide H. The N-acetyltransferase hkm3 finally transfers an acetyl group to 1-N of piperazine, converting hancockiamide A into hancockiamide B and hancockiamide G into hancockiamide C. The sequence is that of Phenylalanine ammonia-lyase hkm12 from Aspergillus hancockii.